We begin with the raw amino-acid sequence, 114 residues long: Replication initiation control protein YabA (114 aa).

The Zn(2+) site is built by histidine 79, cysteine 81, cysteine 95, and cysteine 98.

The protein belongs to the YabA family. As to quaternary structure, homotetramer. Interacts with both DnaA and DnaN, acting as a bridge between these two proteins. The cofactor is Zn(2+).

The protein resides in the cytoplasm. It localises to the nucleoid. Involved in control of chromosome replication initiation. Inhibits the cooperative binding of DnaA to the oriC region, thus negatively regulating initiation of chromosome replication. Inhibits the ability of DnaA-ATP to form a helix on DNA; does not disassemble preformed DnaA-DNA helices. Decreases the residence time of DnaA on the chromosome at its binding sites (oriC, replication forks and promoter-binding sites). Tethers DnaA to the replication machinery via the DNA polymerase beta sliding clamp subunit (dnaN). Associates with oriC and other DnaA targets on the chromosome in a DnaA-dependent manner. In Lactobacillus gasseri (strain ATCC 33323 / DSM 20243 / BCRC 14619 / CIP 102991 / JCM 1131 / KCTC 3163 / NCIMB 11718 / NCTC 13722 / AM63), this protein is Replication initiation control protein YabA.